A 154-amino-acid polypeptide reads, in one-letter code: Fibroblast growth factor 2 (154 aa).

Positions 1–9 are excised as a propeptide; sequence MAAGSITSL. Positions 1–20 are disordered; it reads MAAGSITSLPALPEDGGGAF. N35 contacts heparin. Y81 carries the phosphotyrosine; by TEC modification. K94 participates in a covalent cross-link: Glycyl lysine isopeptide (Lys-Gly) (interchain with G-Cter in SUMO1). The tract at residues 127 to 143 is heparin-binding; it reads KRTGQYKLGSKTGPGQK.

Belongs to the heparin-binding growth factors family. Monomer. Homodimer. Interacts with FGFR1, FGFR2, FGFR3 and FGFR4. Affinity between fibroblast growth factors (FGFs) and their receptors is increased by heparan sulfate glycosaminoglycans that function as coreceptors. Interacts with CSPG4, FGFBP1 and TEC. Found in a complex with FGFBP1, FGF1 and FGF2. Interacts with FGFBP3. Interacts with integrin ITGAV:ITGB3; the interaction is required for FGF2 signaling. Interacts with SNORC (via the extracellular domain). Interacts with GPC3. Phosphorylation at Tyr-81 regulates FGF2 unconventional secretion. Found in all tissues examined.

It localises to the secreted. It is found in the nucleus. Its function is as follows. Acts as a ligand for FGFR1, FGFR2, FGFR3 and FGFR4. Also acts as an integrin ligand which is required for FGF2 signaling. Binds to integrin ITGAV:ITGB3. Plays an important role in the regulation of cell survival, cell division, cell differentiation and cell migration. Functions as a potent mitogen in vitro. Can induce angiogenesis. Mediates phosphorylation of ERK1/2 and thereby promotes retinal lens fiber differentiation. This Rattus norvegicus (Rat) protein is Fibroblast growth factor 2 (Fgf2).